Consider the following 185-residue polypeptide: GTP-binding protein rhb1 (185 aa).

GTP is bound by residues Ser16, Gly18, Lys19, Ser20, Ser21, Val32, Tyr35, Thr38, Asn119, Asp122, and Ala150. Residue Ser20 coordinates Mg(2+). The Effector region signature appears at 35 to 43 (YYPTIENTF). Residue Thr38 participates in Mg(2+) binding. Cys182 is modified (cysteine methyl ester). A lipid anchor (S-farnesyl cysteine) is attached at Cys182. A propeptide spans 183–185 (VIA) (removed in mature form).

This sequence belongs to the small GTPase superfamily. Rheb family.

It is found in the cell membrane. It carries out the reaction GTP + H2O = GDP + phosphate + H(+). Binds GTP and exhibits intrinsic GTPase activity. Regulates entry into stationary phase when extracellular nitrogen levels are adequate for growth. The protein is GTP-binding protein rhb1 (rhb1) of Schizosaccharomyces pombe (strain 972 / ATCC 24843) (Fission yeast).